The chain runs to 342 residues: S-adenosylmethionine:tRNA ribosyltransferase-isomerase (342 aa).

The protein belongs to the QueA family. In terms of assembly, monomer.

The protein localises to the cytoplasm. It carries out the reaction 7-aminomethyl-7-carbaguanosine(34) in tRNA + S-adenosyl-L-methionine = epoxyqueuosine(34) in tRNA + adenine + L-methionine + 2 H(+). It functions in the pathway tRNA modification; tRNA-queuosine biosynthesis. In terms of biological role, transfers and isomerizes the ribose moiety from AdoMet to the 7-aminomethyl group of 7-deazaguanine (preQ1-tRNA) to give epoxyqueuosine (oQ-tRNA). In Brevibacillus brevis (strain 47 / JCM 6285 / NBRC 100599), this protein is S-adenosylmethionine:tRNA ribosyltransferase-isomerase.